The following is a 381-amino-acid chain: 1-deoxy-D-xylulose 5-phosphate reductoisomerase (381 aa).

NADPH-binding residues include T11, G12, S13, I14, N37, and N121. 1-deoxy-D-xylulose 5-phosphate is bound at residue K122. Residue E123 coordinates NADPH. D147 lines the Mn(2+) pocket. 1-deoxy-D-xylulose 5-phosphate is bound by residues S148, E149, S173, and H196. Position 149 (E149) interacts with Mn(2+). G202 contributes to the NADPH binding site. 4 residues coordinate 1-deoxy-D-xylulose 5-phosphate: S209, N214, K215, and E218. E218 contributes to the Mn(2+) binding site.

Belongs to the DXR family. The cofactor is Mg(2+). It depends on Mn(2+) as a cofactor.

It catalyses the reaction 2-C-methyl-D-erythritol 4-phosphate + NADP(+) = 1-deoxy-D-xylulose 5-phosphate + NADPH + H(+). The protein operates within isoprenoid biosynthesis; isopentenyl diphosphate biosynthesis via DXP pathway; isopentenyl diphosphate from 1-deoxy-D-xylulose 5-phosphate: step 1/6. In terms of biological role, catalyzes the NADPH-dependent rearrangement and reduction of 1-deoxy-D-xylulose-5-phosphate (DXP) to 2-C-methyl-D-erythritol 4-phosphate (MEP). This is 1-deoxy-D-xylulose 5-phosphate reductoisomerase from Ruminiclostridium cellulolyticum (strain ATCC 35319 / DSM 5812 / JCM 6584 / H10) (Clostridium cellulolyticum).